Consider the following 435-residue polypeptide: Phosphomethylpyrimidine synthase (435 aa).

Substrate is bound by residues Asn-67, Met-96, Tyr-125, His-163, 185 to 187 (SRG), 226 to 229 (DGLR), and Glu-265. Zn(2+) is bound at residue His-269. Residue Tyr-292 participates in substrate binding. Zn(2+) is bound at residue His-333. [4Fe-4S] cluster contacts are provided by Cys-408, Cys-411, and Cys-415.

The protein belongs to the ThiC family. [4Fe-4S] cluster is required as a cofactor.

It catalyses the reaction 5-amino-1-(5-phospho-beta-D-ribosyl)imidazole + S-adenosyl-L-methionine = 4-amino-2-methyl-5-(phosphooxymethyl)pyrimidine + CO + 5'-deoxyadenosine + formate + L-methionine + 3 H(+). The protein operates within cofactor biosynthesis; thiamine diphosphate biosynthesis. Catalyzes the synthesis of the hydroxymethylpyrimidine phosphate (HMP-P) moiety of thiamine from aminoimidazole ribotide (AIR) in a radical S-adenosyl-L-methionine (SAM)-dependent reaction. This chain is Phosphomethylpyrimidine synthase, found in Thermus thermophilus (strain ATCC BAA-163 / DSM 7039 / HB27).